Reading from the N-terminus, the 240-residue chain is Uridylate kinase (240 aa).

Residue 12 to 15 (KLSG) participates in ATP binding. An involved in allosteric activation by GTP region spans residues 20–25 (GEQGFG). Position 54 (G54) interacts with UMP. Residues G55 and R59 each coordinate ATP. Residues D74 and 135–142 (TGNPYFST) contribute to the UMP site. 3 residues coordinate ATP: N163, Y169, and D172.

Belongs to the UMP kinase family. As to quaternary structure, homohexamer.

It localises to the cytoplasm. It catalyses the reaction UMP + ATP = UDP + ADP. It participates in pyrimidine metabolism; CTP biosynthesis via de novo pathway; UDP from UMP (UMPK route): step 1/1. Its activity is regulated as follows. Allosterically activated by GTP. Inhibited by UTP. Catalyzes the reversible phosphorylation of UMP to UDP. This Bacillus cereus (strain ATCC 14579 / DSM 31 / CCUG 7414 / JCM 2152 / NBRC 15305 / NCIMB 9373 / NCTC 2599 / NRRL B-3711) protein is Uridylate kinase.